Consider the following 261-residue polypeptide: DNA repair protein RecO (261 aa).

This sequence belongs to the RecO family.

Involved in DNA repair and RecF pathway recombination. The polypeptide is DNA repair protein RecO (Chlorobium phaeobacteroides (strain DSM 266 / SMG 266 / 2430)).